We begin with the raw amino-acid sequence, 214 residues long: GTP-binding nuclear protein GSP1/Ran (214 aa).

In terms of domain architecture, Small GTPase Ran-type spans 4-168; that stretch reads EVAAFKLVLV…LWLARKLAGN (165 aa). 15–22 is a binding site for GTP; it reads DGGTGKTT. The switch-I stretch occupies residues 34-42; sequence NRYNATLGV. GTP-binding positions include G65, 119-122, and 147-149; these read NKVD and SAK. The interval 65-81 is switch-II; it reads GQEKFGGLRDGYYINGQ.

This sequence belongs to the small GTPase superfamily. Ran family. In terms of assembly, found in a nuclear export complex with RanGTP, exportin and pre-miRNA.

The protein localises to the nucleus. Its function is as follows. GTP-binding protein involved in nucleocytoplasmic transport. Required for the import of protein into the nucleus and also for RNA export. Involved in chromatin condensation and control of cell cycle. The protein is GTP-binding nuclear protein GSP1/Ran (GSP1) of Yarrowia lipolytica (strain CLIB 122 / E 150) (Yeast).